We begin with the raw amino-acid sequence, 170 residues long: Thioredoxin-like protein YneN (170 aa).

Residues 5–23 (WLAGILLIMLVGYTGWNLY) traverse the membrane as a helical segment. In terms of domain architecture, Thioredoxin spans 33–170 (IQEGQQAPDF…KEMEQKLDLD (138 aa)). Cys-71 and Cys-74 form a disulfide bridge.

It belongs to the thioredoxin family.

The protein resides in the cell membrane. This Bacillus subtilis (strain 168) protein is Thioredoxin-like protein YneN (yneN).